The chain runs to 642 residues: DNA primase (642 aa).

The CHC2-type zinc finger occupies 41–65 (CPFHNEKSPSFHVRPNHGHFHCFGC). The Toprim domain occupies 262-348 (HQAVVVEGYT…AGKSFVAVAA (87 aa)). The Mg(2+) site is built by E268, D319, and D321. Positions 445-480 (NRRSVPERTRRRSVSVEQSPFMQPPGAPADQLAARP) are disordered.

This sequence belongs to the DnaG primase family. In terms of assembly, monomer. Interacts with DnaB. It depends on Zn(2+) as a cofactor. Mg(2+) is required as a cofactor.

The enzyme catalyses ssDNA + n NTP = ssDNA/pppN(pN)n-1 hybrid + (n-1) diphosphate.. RNA polymerase that catalyzes the synthesis of short RNA molecules used as primers for DNA polymerase during DNA replication. This Mycobacterium leprae (strain TN) protein is DNA primase.